A 360-amino-acid polypeptide reads, in one-letter code: Glutamate 5-kinase (360 aa).

K7 is an ATP binding site. Substrate-binding residues include S47, D134, and N146. Residues 166-167 and 208-214 contribute to the ATP site; these read TD and TGGIKTK. One can recognise a PUA domain in the interval 273 to 344; sequence VGEIHLDDGA…IGINSRSETT (72 aa).

Belongs to the glutamate 5-kinase family.

The protein localises to the cytoplasm. The enzyme catalyses L-glutamate + ATP = L-glutamyl 5-phosphate + ADP. The protein operates within amino-acid biosynthesis; L-proline biosynthesis; L-glutamate 5-semialdehyde from L-glutamate: step 1/2. In terms of biological role, catalyzes the transfer of a phosphate group to glutamate to form L-glutamate 5-phosphate. In Prochlorococcus marinus (strain NATL2A), this protein is Glutamate 5-kinase.